A 384-amino-acid polypeptide reads, in one-letter code: 5-amino-6-(D-ribitylamino)uracil--L-tyrosine 4-hydroxyphenyl transferase 2 (384 aa).

The region spanning 53–286 is the Radical SAM core domain; that stretch reads VSYVVNRNIY…IAISRVILHT (234 aa). Positions 67, 71, and 74 each coordinate [4Fe-4S] cluster.

It belongs to the radical SAM superfamily. CofH family. As to quaternary structure, consists of two subunits, CofG and CofH. [4Fe-4S] cluster is required as a cofactor.

The enzyme catalyses 5-amino-6-(D-ribitylamino)uracil + L-tyrosine + S-adenosyl-L-methionine = 5-amino-5-(4-hydroxybenzyl)-6-(D-ribitylimino)-5,6-dihydrouracil + 2-iminoacetate + 5'-deoxyadenosine + L-methionine + H(+). Its pathway is cofactor biosynthesis; coenzyme F0 biosynthesis. In terms of biological role, catalyzes the radical-mediated synthesis of 5-amino-5-(4-hydroxybenzyl)-6-(D-ribitylimino)-5,6-dihydrouracil from 5-amino-6-(D-ribitylamino)uracil and L-tyrosine. This chain is 5-amino-6-(D-ribitylamino)uracil--L-tyrosine 4-hydroxyphenyl transferase 2, found in Methanosarcina barkeri (strain Fusaro / DSM 804).